We begin with the raw amino-acid sequence, 365 residues long: Alanine racemase (365 aa).

Lys-32 serves as the catalytic Proton acceptor; specific for D-alanine. Lys-32 is subject to N6-(pyridoxal phosphate)lysine. Arg-128 provides a ligand contact to substrate. The active-site Proton acceptor; specific for L-alanine is the Tyr-257. Substrate is bound at residue Met-305.

The protein belongs to the alanine racemase family. The cofactor is pyridoxal 5'-phosphate.

The enzyme catalyses L-alanine = D-alanine. The protein operates within amino-acid biosynthesis; D-alanine biosynthesis; D-alanine from L-alanine: step 1/1. In terms of biological role, catalyzes the interconversion of L-alanine and D-alanine. May also act on other amino acids. The polypeptide is Alanine racemase (alr) (Francisella tularensis subsp. novicida (strain U112)).